We begin with the raw amino-acid sequence, 361 residues long: mRNA export factor ICP27 homolog (361 aa).

A compositionally biased stretch (low complexity) spans 1 to 15 (MEDSGNSSGSEASRS). Residues 1–107 (MEDSGNSSGS…SESARAAVSA (107 aa)) are disordered. Over residues 16 to 36 (GSEERRPVRERLGSRPPERRP) the composition is skewed to basic and acidic residues. An RGG-box region spans residues 45 to 54 (RRRRGGRGGR). The segment covering 80 to 99 (RQEADRPDGGPDAPPDRLSE) has biased composition (basic and acidic residues). Zn(2+) contacts are provided by cysteine 253, histidine 328, cysteine 332, and cysteine 337. The CHC2-type zinc-finger motif lies at 253-337 (CYLRDTPVDE…HKTGCDAPTC (85 aa)).

Belongs to the HHV-1 ICP27 protein family. In terms of assembly, homodimer. Homodimerization is required for transactivation. Associates in a complex with RNA, and host export factors NXF1/TAP and ALYREF; these interactions allow nuclear export of viral transcripts. Interacts with three host shuttling SR proteins SRSF1, SRSF3 and SRSF7. Interacts with host SRPK1. Interacts with IE62; this interaction enhances IE62 transactivation.

It is found in the host cytoplasm. Its subcellular location is the host nucleus. Functionally, multifunctional regulator of the expression of viral genes that mediates nuclear export of viral intronless mRNAs. This immediate early (EI) protein promotes the nuclear export of viral intronless mRNAs by interacting with mRNAs and host NXF1/TAP. In Suid herpesvirus 1 (strain Kaplan) (SuHV-1), this protein is mRNA export factor ICP27 homolog.